The primary structure comprises 189 residues: FUN14 domain-containing protein 2 (189 aa).

Over 1-80 the chain is Cytoplasmic; sequence METSAPRAGS…GQESGPSAEK (80 aa). A phosphoserine mark is found at S10 and S53. The chain crosses the membrane as a helical span at residues 81–101; it reads YSVATQLFIGGVTGWCTGFIF. The Mitochondrial intermembrane segment spans residues 102–107; it reads QKVGKL. A helical transmembrane segment spans residues 108 to 128; it reads AATAVGGGFFLLQLANHTGYI. Over 129 to 164 the chain is Cytoplasmic; sequence KVDWQRVEKDMKKAKEQLKIRKSNQIPTEVRSKAEE. S151 carries the phosphoserine modification. Residues 165–185 form a helical membrane-spanning segment; it reads VVSFVKKNVLVTGGFFGGFLL. The Mitochondrial intermembrane segment spans residues 186 to 189; it reads GMAS.

Belongs to the FUN14 family. As to expression, highly expressed in platelets (at protein level).

The protein resides in the mitochondrion outer membrane. The protein localises to the nucleus. Its function is as follows. Binds directly and specifically 1,2-Diacyl-sn-glycero-3-phospho-(1'-myo-inositol-3',4',5'-bisphosphate) (PIP3) leading to the recruitment of PIP3 to mitochondria and may play a role in the regulation of the platelet activation via AKT/GSK3B/cGMP signaling pathways. May act as transcription factor that regulates SREBP1 (isoform SREBP-1C) expression in order to modulate triglyceride (TG) homeostasis in hepatocytes. This Homo sapiens (Human) protein is FUN14 domain-containing protein 2.